Here is a 187-residue protein sequence, read N- to C-terminus: Protein GrpE (187 aa).

The interval 1 to 30 is disordered; sequence MEKKETKNETEKTNKQDNKNTKSQKKENLN.

This sequence belongs to the GrpE family. As to quaternary structure, homodimer.

The protein resides in the cytoplasm. Participates actively in the response to hyperosmotic and heat shock by preventing the aggregation of stress-denatured proteins, in association with DnaK and GrpE. It is the nucleotide exchange factor for DnaK and may function as a thermosensor. Unfolded proteins bind initially to DnaJ; upon interaction with the DnaJ-bound protein, DnaK hydrolyzes its bound ATP, resulting in the formation of a stable complex. GrpE releases ADP from DnaK; ATP binding to DnaK triggers the release of the substrate protein, thus completing the reaction cycle. Several rounds of ATP-dependent interactions between DnaJ, DnaK and GrpE are required for fully efficient folding. In Borreliella afzelii (strain PKo) (Borrelia afzelii), this protein is Protein GrpE.